Here is a 393-residue protein sequence, read N- to C-terminus: ATP phosphoribosyltransferase regulatory subunit (393 aa).

Belongs to the class-II aminoacyl-tRNA synthetase family. HisZ subfamily. Heteromultimer composed of HisG and HisZ subunits.

It localises to the cytoplasm. It participates in amino-acid biosynthesis; L-histidine biosynthesis; L-histidine from 5-phospho-alpha-D-ribose 1-diphosphate: step 1/9. Functionally, required for the first step of histidine biosynthesis. May allow the feedback regulation of ATP phosphoribosyltransferase activity by histidine. This chain is ATP phosphoribosyltransferase regulatory subunit, found in Shouchella clausii (strain KSM-K16) (Alkalihalobacillus clausii).